The sequence spans 83 residues: Hainantoxin-III 11 (83 aa).

The first 21 residues, 1 to 21 (MKASMFLALAGLVLLFVVGYA), serve as a signal peptide directing secretion. The propeptide occupies 22-48 (SESEEKDFPRELLSKIFAVDDFKGEER). Disulfide bonds link cysteine 50–cysteine 65, cysteine 57–cysteine 70, and cysteine 64–cysteine 77. Leucine 81 is subject to Leucine amide.

The protein belongs to the neurotoxin 10 (Hwtx-1) family. 15 (Hntx-3) subfamily. Monomer. Expressed by the venom gland.

It localises to the secreted. Its function is as follows. Selective antagonist of neuronal tetrodotoxin (TTX)-sensitive voltage-gated sodium channels (IC(50)=1270 nM on Nav1.1/SCN1A, 270 nM on Nav1.2/SCN2A, 491 nM on Nav1.3/SCN3A and 232 nM on Nav1.7/SCN9A). This toxin suppress Nav1.7 current amplitude without significantly altering the activation, inactivation, and repriming kinetics. Short extreme depolarizations partially activate the toxin-bound channel, indicating voltage-dependent inhibition of this toxin. This toxin increases the deactivation of the Nav1.7 current after extreme depolarizations. The toxin-Nav1.7 complex is gradually dissociated upon prolonged strong depolarizations in a voltage-dependent manner, and the unbound toxin rebinds to Nav1.7 after a long repolarization. Moreover, analysis of chimeric channels showed that the DIIS3-S4 linker is critical for toxin binding to Nav1.7. These data are consistent with this toxin interacting with Nav1.7 site 4 and trapping the domain II voltage sensor in the closed state. This chain is Hainantoxin-III 11, found in Cyriopagopus hainanus (Chinese bird spider).